The primary structure comprises 413 residues: MTSSRVENSSSRAARKVKLALMGPAFVAAIGYIDPGNFATNIQAGASFGYQLLWVVVWANLMAMLIQVLSAKLGIATGKNLAEQIRDHYPRPVVWFYWVQAEIIAMATDLAEFIGAAIGFKLVLGVSLLQGAVLTGVATFLILMLQRRGQKPLEKVIGGLLLFVAVAYVVELIFSQPALAPLTKGLVIPTLPNGEAVFLAAGVLGATIMPHVIYLHSSLTQHLHGGTRKERYNATRWDVAIAMTIAGFVNLAMMATAAAAFHFNGHTGVADLDQAYMTLEPLLSHAAATIFGLSLIAAGLSSTVVGTLAGQVVMQGFIRFHIPLWFRRAITMLPSFVVILLGLDPTRILVMSQVLLSFGIALALVPLLIFTSNAKLMGDLVNTRWVRGIGWAIVAIVVSLNGWLIVGSLLGVD.

The next 11 helical transmembrane spans lie at 19–39, 46–66, 94–114, 122–142, 156–176, 196–216, 241–261, 290–310, 329–349, 350–370, and 389–409; these read LALMGPAFVAAIGYIDPGNFA, ASFGYQLLWVVVWANLMAMLI, VWFYWVQAEIIAMATDLAEFI, LVLGVSLLQGAVLTGVATFLI, VIGGLLLFVAVAYVVELIFSQ, AVFLAAGVLGATIMPHVIYLH, IAMTIAGFVNLAMMATAAAAF, IFGLSLIAAGLSSTVVGTLAG, AITMLPSFVVILLGLDPTRIL, VMSQVLLSFGIALALVPLLIF, and IGWAIVAIVVSLNGWLIVGSL.

This sequence belongs to the NRAMP family.

The protein resides in the cell inner membrane. Its function is as follows. H(+)-stimulated, divalent metal cation uptake system. The chain is Divalent metal cation transporter MntH from Klebsiella pneumoniae subsp. pneumoniae (strain ATCC 700721 / MGH 78578).